Here is a 1193-residue protein sequence, read N- to C-terminus: Protogenin (1193 aa).

Residues 1–23 form the signal peptide; that stretch reads MAPPVRPGMLPLLLLLLLPPLGS. Ig-like domains lie at 24-124, 126-217, 230-317, and 322-406; these read VPGV…AHLT, STIS…ASLT, PTII…ATLT, and PSFV…ARLT. The Extracellular segment spans residues 24–944; it reads VPGVWSFSEL…YYHLDQKSMT (921 aa). 2 disulfides stabilise this stretch: Cys-54-Cys-107 and Cys-150-Cys-200. A glycan (N-linked (GlcNAc...) asparagine) is linked at Asn-84. A glycan (N-linked (GlcNAc...) asparagine) is linked at Asn-238. Disulfide bonds link Cys-251-Cys-299 and Cys-343-Cys-390. Fibronectin type-III domains are found at residues 416–510, 512–608, 613–712, 719–812, and 817–912; these read APYN…TLED, PLRP…TPKA, APKS…VRDR, PPHH…TLPE, and PPVG…VLPK. Asn-625 carries an N-linked (GlcNAc...) asparagine glycan. A helical membrane pass occupies residues 945-965; sequence GIAVGVGIALTCILICVLILI. Residues 966–1193 are Cytoplasmic-facing; the sequence is YRSKARKSSA…LRHAAESVPV (228 aa). 2 disordered regions span residues 974-1018 and 1078-1193; these read SASK…PMMP and VLIS…SVPV. Polar residues-rich tracts occupy residues 978-990 and 1086-1095; these read TTQS…SRAS and PSSPGQTTSF. Positions 1105 to 1133 are enriched in basic and acidic residues; that stretch reads DTEHSANSEGSHETGDSGRFSHESNDEIH. Positions 1136–1150 are enriched in polar residues; it reads SVISSTPPTSNSLTC.

This sequence belongs to the immunoglobulin superfamily. DCC family.

It localises to the membrane. In terms of biological role, may play a role in anteroposterior axis elongation. In Rattus norvegicus (Rat), this protein is Protogenin.